A 496-amino-acid polypeptide reads, in one-letter code: Probable malate:quinone oxidoreductase (496 aa).

This sequence belongs to the MQO family. FAD serves as cofactor.

It catalyses the reaction (S)-malate + a quinone = a quinol + oxaloacetate. The protein operates within carbohydrate metabolism; tricarboxylic acid cycle; oxaloacetate from (S)-malate (quinone route): step 1/1. The chain is Probable malate:quinone oxidoreductase from Prochlorococcus marinus (strain NATL2A).